A 525-amino-acid chain; its full sequence is Ent-kaurene oxidase (525 aa).

A helical membrane pass occupies residues 31–51 (VHWLIYVAFGAWLCSYVIHVL). Position 466 (Cys-466) interacts with heme.

The protein belongs to the cytochrome P450 family. Requires heme as cofactor.

It is found in the membrane. The enzyme catalyses ent-kaur-16-ene + 3 reduced [NADPH--hemoprotein reductase] + 3 O2 = ent-kaur-16-en-19-oate + 3 oxidized [NADPH--hemoprotein reductase] + 4 H2O + 4 H(+). It participates in plant hormone biosynthesis; gibberellin biosynthesis. Functionally, catalyzes three successive oxidations of the 4-methyl group of ent-kaurene giving kaurenoic acid, a key step in gibberellin (GA) biosynthesis. This chain is Ent-kaurene oxidase (CYP503A1), found in Gibberella intermedia (Bulb rot disease fungus).